Consider the following 145-residue polypeptide: D-aminoacyl-tRNA deacylase (145 aa).

The Gly-cisPro motif, important for rejection of L-amino acids motif lies at 137–138 (GP).

Belongs to the DTD family. Homodimer.

The protein resides in the cytoplasm. The catalysed reaction is glycyl-tRNA(Ala) + H2O = tRNA(Ala) + glycine + H(+). The enzyme catalyses a D-aminoacyl-tRNA + H2O = a tRNA + a D-alpha-amino acid + H(+). An aminoacyl-tRNA editing enzyme that deacylates mischarged D-aminoacyl-tRNAs. Also deacylates mischarged glycyl-tRNA(Ala), protecting cells against glycine mischarging by AlaRS. Acts via tRNA-based rather than protein-based catalysis; rejects L-amino acids rather than detecting D-amino acids in the active site. By recycling D-aminoacyl-tRNA to D-amino acids and free tRNA molecules, this enzyme counteracts the toxicity associated with the formation of D-aminoacyl-tRNA entities in vivo and helps enforce protein L-homochirality. This chain is D-aminoacyl-tRNA deacylase, found in Pseudomonas fluorescens (strain SBW25).